The sequence spans 577 residues: BICD family-like cargo adapter 1 (577 aa).

The segment at 63-100 (LLAAGERSSEPGEHPQAEPESPVEGHGPPLPPPPTQDP) is disordered. A compositionally biased stretch (basic and acidic residues) spans 69 to 79 (RSSEPGEHPQA). The short motif at 116–120 (AARLG) is the CC1 box element. The stretch at 121–379 (KALLERNQDM…QLWEAYCQVR (259 aa)) forms a coiled coil. The segment at 389-415 (DSADSAVSTDSSMDESSETSSAKDVPA) is disordered. The span at 390–399 (SADSAVSTDS) shows a compositional bias: low complexity. Positions 443-528 (LSVEMTALKE…LEAWQDDMHR (86 aa)) form a coiled coil.

The protein belongs to the BICDR family. As to quaternary structure, part of a tripartite complex with dynein and dynactin, acts an adapter linking the dynein motor complex and dynactin. Interacts with KIF1C. Interacts with RAB6A and RAB6B; interaction is specific to Rab6. Highly expressed during early embryonic development. Predominantly expressed in kidney, undifferentiated neural tissue and developing eye.

Its subcellular location is the cytoplasm. It is found in the cytoskeleton. It localises to the microtubule organizing center. The protein localises to the centrosome. Functionally, acts as an adapter protein linking the dynein motor complex to various cargos and converts dynein from a non-processive to a highly processive motor in the presence of dynactin. Facilitates the interaction between dynein and dynactin and activates dynein processivity (the ability to move along a microtubule for a long distance without falling off the track). Predominantly recruits 2 dyneins, which increases both the force and speed of the microtubule motor. Component of secretory vesicle machinery in developing neurons that acts as a regulator of neurite outgrowth. Regulates the secretory vesicle transport by controlling the accumulation of Rab6-containing secretory vesicles in the pericentrosomal region restricting anterograde secretory transport during the early phase of neuronal differentiation, thereby inhibiting neuritogenesis. The sequence is that of BICD family-like cargo adapter 1 (Bicdl1) from Mus musculus (Mouse).